Consider the following 342-residue polypeptide: Glucokinase (342 aa).

Residue 7–12 participates in ATP binding; the sequence is GDIGGT.

This sequence belongs to the bacterial glucokinase family.

It localises to the cytoplasm. The enzyme catalyses D-glucose + ATP = D-glucose 6-phosphate + ADP + H(+). The polypeptide is Glucokinase (Trichormus variabilis (strain ATCC 29413 / PCC 7937) (Anabaena variabilis)).